The primary structure comprises 490 residues: MSSLQILQGTFRLSDTKTLQLPQLTLNAGDSWAFVGSNGSGKSALARALAGELPLLKGERQSQFSHITRLSFEQLQKLVSDEWQRNNTDMLGPGEDDTGRTTAEIIQDEVKDAPRCMQLAQQFGITALLDRRFKYLSTGETRKTLLCQALMSEPDLLILDEPFDGLDVASRQQLAERLASLHQSGITLVLVLNRFDEIPEFVQFAGVLADCTLAETGAKEELLQQALVAQLAHSEQLEGVQLPEPDEPSARHALPANEPRIVLNNGVVSYNDRPILNNLSWQVNPGEHWQIVGPNGAGKSTLLSLVTGDHPQGYSNDLTLFGRRRGSGETIWDIKKHIGYVSSSLHLDYRVSTTVRNVILSGYFDSIGIYQAVSDRQQKLVQQWLDILGIDKRTADAPFHSLSWGQQRLALIVRALVKHPTLLILDEPLQGLDPLNRQLIRRFVDVLISEGETQLLFVSHHAEDAPACITHRLEFVPDGGLYRYVLTKIY.

ABC transporter domains follow at residues 4-235 and 261-489; these read LQIL…AHSE and IVLN…LTKI. ATP-binding positions include 36–43 and 293–300; these read GSNGSGKS and GPNGAGKS.

The protein belongs to the ABC transporter superfamily.

The protein resides in the cell inner membrane. Probably not involved in the transport of molybdenum into the cell. The protein is ABC transporter ATP-binding protein ModF (modF) of Escherichia coli (strain K12).